Here is a 249-residue protein sequence, read N- to C-terminus: tRNA 2'-phosphotransferase 1 (249 aa).

Residue Met-1 is modified to N-acetylmethionine. Disordered regions lie at residues 1-25 (MNAP…RNVQ) and 220-249 (KPLS…KIQQ).

The protein belongs to the KptA/TPT1 family.

It carries out the reaction 2'-phospho-[ligated tRNA] + NAD(+) = mature tRNA + ADP-alpha-D-ribose 1'',2''-cyclic phosphate + nicotinamide. Functionally, catalyzes the last step of tRNA splicing, the transfer of the splice junction 2'-phosphate from ligated tRNA to NAD to produce ADP-ribose 1''-2'' cyclic phosphate. The protein is tRNA 2'-phosphotransferase 1 (Trpt1) of Mus musculus (Mouse).